Here is a 106-residue protein sequence, read N- to C-terminus: Valine dehydrogenase (106 aa).

The active site involves Lys91.

Belongs to the Glu/Leu/Phe/Val dehydrogenases family. In terms of assembly, homodimer.

Its subcellular location is the cytoplasm. It catalyses the reaction L-valine + NAD(+) + H2O = 3-methyl-2-oxobutanoate + NH4(+) + NADH + H(+). The protein operates within amino-acid degradation; L-valine degradation. Its function is as follows. Oxidative deamination of branched-chain amino acids. The catabolism of valine is the major source of fatty acid precursors for macrolide biosynthesis and a vital source of antibiotic precursors. The protein is Valine dehydrogenase (vdh) of Streptomyces ambofaciens.